Here is a 723-residue protein sequence, read N- to C-terminus: Homeobox protein HAT3.1 (723 aa).

Residues 1-10 (MYKAVSKRVT) show a composition bias toward basic residues. 2 disordered regions span residues 1–94 (MYKA…GSHR) and 135–173 (KRAQRSKEDAGPSSVVANSTPVGRPKKKNKTMNKGQVRE). Residues 11–23 (RSSGSGLKQTNVD) are compositionally biased toward polar residues. Residues 58–83 (LHHEIMDHGKGNEEQKPTPQTVKKDS) show a composition bias toward basic and acidic residues. Residues 265–322 (DIFCAKCGSKDLSVDNDIILCDGFCDRGFHQYCLEPPLRKEDIPPDDEGWLCPGCDCK) form a PHD-type zinc finger. Disordered stretches follow at residues 357 to 628 (GGQN…KTQR) and 680 to 723 (VEKL…RRRK). Over residues 365–407 (LPSDDSDDEEYDPDCLNDNENDEDGSDDNEESENEDGSSDETE) the composition is skewed to acidic residues. A compositionally biased stretch (basic and acidic residues) spans 417–427 (ESFKEGKDIMK). Over residues 435-453 (DDSEDDDYDPDAPTCDDDK) the composition is skewed to acidic residues. Basic and acidic residues-rich tracts occupy residues 518–530 (RNVERLDYKKLYD) and 547–556 (DKTARMGKED). Residues 580-589 (KKLIRKSKRA) are compositionally biased toward basic residues. The segment at residues 614-673 (SSSSACKQTDPKTQRLYISFQENQYPDKATKESLAKELQMTVKQVNNWFKHRRWSINSKP) is a DNA-binding region (homeobox). The segment covering 680–690 (VEKLKTGKEGE) has biased composition (basic and acidic residues). Over residues 695 to 705 (VAGSSKQTMET) the composition is skewed to polar residues.

This sequence belongs to the PHD-associated homeobox family. In terms of tissue distribution, primarily detected in root tissue.

It localises to the nucleus. Binds only to large DNA fragments. Recognizes a DNA fragment carrying 8 copies of box7 motif of the light-induced cab-E promoter of Nicotiana plumbaginifolia. Also recognizes the box7m1 motif. In Arabidopsis thaliana (Mouse-ear cress), this protein is Homeobox protein HAT3.1 (HAT3.1).